A 314-amino-acid polypeptide reads, in one-letter code: Chitinase 1 (314 aa).

The N-terminal stretch at 1–26 (MASVSPSSLLLLFFALLSPLLPLTSA) is a signal peptide. The GH18 domain maps to 27–296 (LVFREYIGSQ…NVFRYEMQAQ (270 aa)). Catalysis depends on Glu151, which acts as the Proton donor.

This sequence belongs to the glycosyl hydrolase 18 family. Chitinase class II subfamily.

The catalysed reaction is Random endo-hydrolysis of N-acetyl-beta-D-glucosaminide (1-&gt;4)-beta-linkages in chitin and chitodextrins.. Functionally, able to cleave glycolchitin. The chain is Chitinase 1 from Tulipa saxatilis subsp. bakeri (Tulip).